The following is a 142-amino-acid chain: RNA-directed DNA polymerase homolog (142 aa).

It localises to the mitochondrion. It catalyses the reaction RNA(n) + a ribonucleoside 5'-triphosphate = RNA(n+1) + diphosphate. This chain is RNA-directed DNA polymerase homolog, found in Oenothera berteroana (Bertero's evening primrose).